Reading from the N-terminus, the 181-residue chain is MMSSKQDEKIILGQINGIYGVQGWVKIFSHTDPRQNILSYSPWLVKVKNEWRTFQVEEGRAQQGGKSVVAKLEGIDDRDLAREYIGCEIAILPEQLPATEEGFYWMQLIGCQVTSVEGEDLGQVTEIVETGAHDVLRVEKQSDAGLVSTLIPFVMETFILDVDVESKQIQVDWQLEDATES.

A PRC barrel domain is found at 100-177; the sequence is EEGFYWMQLI…QIQVDWQLED (78 aa).

The protein belongs to the RimM family. Binds ribosomal protein uS19.

It is found in the cytoplasm. Its function is as follows. An accessory protein needed during the final step in the assembly of 30S ribosomal subunit, possibly for assembly of the head region. Essential for efficient processing of 16S rRNA. May be needed both before and after RbfA during the maturation of 16S rRNA. It has affinity for free ribosomal 30S subunits but not for 70S ribosomes. This Hydrogenovibrio crunogenus (strain DSM 25203 / XCL-2) (Thiomicrospira crunogena) protein is Ribosome maturation factor RimM.